The following is an 888-amino-acid chain: Collagen alpha chain (888 aa).

The disordered stretch occupies residues 1–627; it reads APGPDGLTGT…GPPGQPGMSE (627 aa). The region spanning 3-60 is the Collagen-like 1 domain; sequence GPDGLTGTKGSMGEPGTDGEPGSPGPQGAKGETGLAGRRGLTGIPGKQGRQGERGEPG. Low complexity-rich tracts occupy residues 59 to 73 and 148 to 164; these read PGTAGSQGQQGQPGT and TPGLPGMPGQQGPMGPI. The span at 179 to 190 shows a compositional bias: basic and acidic residues; it reads RGYDGKDGEPGR. Over residues 194 to 203 the composition is skewed to low complexity; sequence PGPIGQPGIP. Residues 311–320 show a composition bias toward pro residues; the sequence is SGPPGPPGPS. Over residues 422–440 the composition is skewed to low complexity; it reads SGSRGAQGPPGAPGSSGQN. The segment covering 441-450 has biased composition (gly residues); the sequence is GVDGGTGENG. Low complexity-rich tracts occupy residues 460–475 and 508–518; these read ESGAPGDPGASGSAGP and EPGPQGDQGPK. One can recognise a Collagen-like 2 domain in the interval 513–571; that stretch reads GDQGPKGQKGEVGPVGEKGDKGWTGTPGDPGPQGDRGEPGPPGRDGVDGPPGPRGAPGE. Residues 610 to 622 show a composition bias toward pro residues; that stretch reads PPGPPGPPGPPGQ. The 224-residue stretch at 661-884 folds into the Fibrillar collagen NC1 domain; sequence ENVLKDLDEK…KLEIGPACFH (224 aa). Intrachain disulfides connect Cys731–Cys882 and Cys793–Cys833.

The protein belongs to the fibrillar collagen family. Component of the acid-insoluble organic matrix of the aragonitic skeleton (at protein level).

The protein localises to the secreted. The chain is Collagen alpha chain from Acropora millepora (Staghorn coral).